A 33-amino-acid polypeptide reads, in one-letter code: Brevinin-2DYa (33 aa).

An intrachain disulfide couples Cys27 to Cys33.

In terms of tissue distribution, expressed by the skin glands.

It is found in the secreted. Functionally, antimicrobial peptide. The protein is Brevinin-2DYa of Rana dybowskii (Dybovsky's frog).